Reading from the N-terminus, the 206-residue chain is Cell division protein SepF (206 aa).

Basic and acidic residues predominate over residues 31–53 (EEKERRKTERQEQRQAVKQEKRT). A disordered region spans residues 31–81 (EEKERRKTERQEQRQAVKQEKRTFPSQRPAFSEEAPTSSSSKLSAASGSSD). The span at 60–80 (AFSEEAPTSSSSKLSAASGSS) shows a compositional bias: low complexity.

Belongs to the SepF family. In terms of assembly, homodimer. Interacts with FtsZ.

It localises to the cytoplasm. Cell division protein that is part of the divisome complex and is recruited early to the Z-ring. Probably stimulates Z-ring formation, perhaps through the cross-linking of FtsZ protofilaments. Its function overlaps with FtsA. In Lachnoclostridium phytofermentans (strain ATCC 700394 / DSM 18823 / ISDg) (Clostridium phytofermentans), this protein is Cell division protein SepF.